A 322-amino-acid chain; its full sequence is Corticotropin-releasing factor-binding protein (322 aa).

A signal peptide spans 1 to 24 (MSPNFKLQCHFILIFLTALRGESR). Disulfide bonds link cysteine 60/cysteine 81, cysteine 104/cysteine 141, cysteine 183/cysteine 205, cysteine 237/cysteine 264, and cysteine 277/cysteine 318. Asparagine 204 is a glycosylation site (N-linked (GlcNAc...) asparagine).

The protein belongs to the CRF-binding protein family.

The protein localises to the secreted. Its function is as follows. Binds CRF and inactivates it. May prevent inappropriate pituitary-adrenal stimulation in pregnancy. The chain is Corticotropin-releasing factor-binding protein (CRHBP) from Homo sapiens (Human).